Consider the following 245-residue polypeptide: 1-(5-phosphoribosyl)-5-[(5-phosphoribosylamino)methylideneamino] imidazole-4-carboxamide isomerase (245 aa).

Aspartate 8 functions as the Proton acceptor in the catalytic mechanism. Aspartate 129 serves as the catalytic Proton donor.

This sequence belongs to the HisA/HisF family.

The protein localises to the cytoplasm. The catalysed reaction is 1-(5-phospho-beta-D-ribosyl)-5-[(5-phospho-beta-D-ribosylamino)methylideneamino]imidazole-4-carboxamide = 5-[(5-phospho-1-deoxy-D-ribulos-1-ylimino)methylamino]-1-(5-phospho-beta-D-ribosyl)imidazole-4-carboxamide. Its pathway is amino-acid biosynthesis; L-histidine biosynthesis; L-histidine from 5-phospho-alpha-D-ribose 1-diphosphate: step 4/9. The sequence is that of 1-(5-phosphoribosyl)-5-[(5-phosphoribosylamino)methylideneamino] imidazole-4-carboxamide isomerase from Rhodopseudomonas palustris (strain BisA53).